The following is a 206-amino-acid chain: Dephospho-CoA kinase (206 aa).

In terms of domain architecture, DPCK spans I4–F200. ATP is bound at residue G12–T17.

The protein belongs to the CoaE family.

It localises to the cytoplasm. It carries out the reaction 3'-dephospho-CoA + ATP = ADP + CoA + H(+). Its pathway is cofactor biosynthesis; coenzyme A biosynthesis; CoA from (R)-pantothenate: step 5/5. In terms of biological role, catalyzes the phosphorylation of the 3'-hydroxyl group of dephosphocoenzyme A to form coenzyme A. This Shigella boydii serotype 4 (strain Sb227) protein is Dephospho-CoA kinase.